We begin with the raw amino-acid sequence, 273 residues long: Putative pyruvate, phosphate dikinase regulatory protein (273 aa).

153-160 (GVSRTSKT) contacts ADP.

This sequence belongs to the pyruvate, phosphate/water dikinase regulatory protein family. PDRP subfamily.

It catalyses the reaction N(tele)-phospho-L-histidyl/L-threonyl-[pyruvate, phosphate dikinase] + ADP = N(tele)-phospho-L-histidyl/O-phospho-L-threonyl-[pyruvate, phosphate dikinase] + AMP + H(+). The catalysed reaction is N(tele)-phospho-L-histidyl/O-phospho-L-threonyl-[pyruvate, phosphate dikinase] + phosphate + H(+) = N(tele)-phospho-L-histidyl/L-threonyl-[pyruvate, phosphate dikinase] + diphosphate. Its function is as follows. Bifunctional serine/threonine kinase and phosphorylase involved in the regulation of the pyruvate, phosphate dikinase (PPDK) by catalyzing its phosphorylation/dephosphorylation. The polypeptide is Putative pyruvate, phosphate dikinase regulatory protein (Rhizobium meliloti (strain 1021) (Ensifer meliloti)).